A 208-amino-acid chain; its full sequence is mRNA 3'-end-processing protein YTH1 (208 aa).

C3H1-type zinc fingers lie at residues 28 to 59 (DPDRPICEFYNSREGPKSCPRGPLCPKKHVLP), 61 to 88 (FQNKIVCRHWLRGLCKKNDQCEYLHEYN), 89 to 117 (LRKMPECVFFSKNGYCTQSPDCQYLHIDP), 118 to 145 (ASKIPKCENYEMGFCPLGSSCPRRHIKK), and 147 to 170 (FCQRYMTGFCPLGKDECDMEHPQF).

Belongs to the CPSF4/YTH1 family. Component of the cleavage and polyadenylation factor (CPF) complex, which is composed of at least PTI1, SYC1, SSU72, GLC7, MPE1, REF2, PFS2, PTA1, YSH1/BRR5, SWD2, CFT2/YDH1, YTH1, CFT1/YHH1, FIP1 and PAP1. Interacts with FIP1 and YSH1.

The protein resides in the nucleus. In terms of biological role, RNA-binding component of the cleavage and polyadenylation factor (CPF) complex, which plays a key role in polyadenylation-dependent pre-mRNA 3'-end formation and cooperates with cleavage factors including the CFIA complex and NAB4/CFIB. The polypeptide is mRNA 3'-end-processing protein YTH1 (YTH1) (Saccharomyces cerevisiae (strain ATCC 204508 / S288c) (Baker's yeast)).